A 144-amino-acid polypeptide reads, in one-letter code: Maximins 9/H3 (144 aa).

The first 18 residues, 1–18 (MNFKYIVAVSFLIASAYA), serve as a signal peptide directing secretion. The propeptide occupies 19–43 (RSVKNDEQSLSQRDVLEEESLREIR). Position 70 is a tyrosine amide (Y70). Residues 74 to 123 (TAEEHEVMKRLEAIMRDLDSLDHPEEASERETRGFNQDEIANLFTKKEKR) constitute a propeptide that is removed on maturation. I143 is subject to Isoleucine amide.

The protein belongs to the bombinin family. Expressed by the skin glands.

Its subcellular location is the secreted. Functionally, maximin-9 shows antimicrobial activity against bacteria and against the fungus C.albicans. It has little hemolytic activity. Its function is as follows. Maximin-H3 shows antibacterial activity against both Gram-positive and Gram-negative bacteria. It also shows antimicrobial activity against the fungus C.albicans. Shows strong hemolytic activity. The polypeptide is Maximins 9/H3 (Bombina maxima (Giant fire-bellied toad)).